A 553-amino-acid polypeptide reads, in one-letter code: MLSVRVAAAVVRALPRRAGLVSRNALGSSFIAARNFHASNTHLQKTGTAEMSSILEERILGADTSVDLEETGRVLSIGDGIARVHGLRNVQAEEMVEFSSGLKGMSLNLEPDNVGVVVFGNDKLIKEGDIVKRTGAIVDVPVGEELLGRVVDALGNAIDGKGPISSKTRRRVGLKAPGIIPRISVREPMQTGIKAVDSLVPIGRGQRELIIGDRQTGKTSIAIDTIINQKRFNDGSDEKKKLYCIYVAIGQKRSTVAQLVKRLTDADAMKYTIVVSATASDAAPLQYLAPYSGCSMGEYFRDNGKHALIIYDDLSKQAVAYRQMSLLLRRPPGREAYPGDVFYLHSRLLERAAKMNDAFGGGSLTALPVIETQAGDVSAYIPTNVISITDGQIFLETELFYKGIRPAINVGLSVSRVGSAAQTRAMKQVAGTMKLELAQYREVAAFAQFGSDLDAATQQLLSRGVRLTELLKQGQYSPMAIEEQVAVIYAGVRGYLDKLEPSKITKFENAFLSHVVSQHQALLGTIRADGKISEQSDAKLKEIVTNFLAGFEA.

The transit peptide at 1 to 43 (MLSVRVAAAVVRALPRRAGLVSRNALGSSFIAARNFHASNTHL) directs the protein to the mitochondrion. Phosphoserine occurs at positions 53 and 65. A Phosphoserine; alternate modification is found at S76. S76 carries O-linked (GlcNAc) serine; alternate glycosylation. S106 is subject to Phosphoserine. N6-acetyllysine occurs at positions 123, 126, and 132. T134 carries the phosphothreonine modification. K161 carries the post-translational modification N6-acetyllysine; alternate. K161 carries the N6-succinyllysine; alternate modification. Phosphoserine is present on S166. An N6-acetyllysine; alternate modification is found at K167. Residue K167 is modified to N6-succinyllysine; alternate. Phosphoserine is present on S184. The residue at position 204 (R204) is an Omega-N-methylarginine. Residues Q215, G217, K218, T219, and S220 each contribute to the ATP site. Residue T219 participates in Mg(2+) binding. 2 positions are modified to N6-acetyllysine; alternate: K230 and K239. Residues K230 and K239 each carry the N6-succinyllysine; alternate modification. K240 bears the N6-acetyllysine mark. N6-acetyllysine; alternate occurs at positions 261 and 305. K261 and K305 each carry N6-succinyllysine; alternate. D312 contributes to the Mg(2+) binding site. K427 carries the post-translational modification N6-acetyllysine; alternate. K427 is modified (N6-succinyllysine; alternate). At K434 the chain carries N6-acetyllysine. 2 residues coordinate ATP: Q473 and Q475. Residues K498, K506, K531, and K539 each carry the N6-acetyllysine; alternate modification. Residues K498, K506, K531, and K539 each carry the N6-succinyllysine; alternate modification. Position 541 is an N6-acetyllysine (K541).

Belongs to the ATPase alpha/beta chains family. In terms of assembly, homotrimer. Component of the ATP synthase complex composed at least of ATP5F1A/subunit alpha, ATP5F1B/subunit beta, ATP5MC1/subunit c (homooctomer), MT-ATP6/subunit a, MT-ATP8/subunit 8, ATP5ME/subunit e, ATP5MF/subunit f, ATP5MG/subunit g, ATP5MK/subunit k, ATP5MJ/subunit j, ATP5F1C/subunit gamma, ATP5F1D/subunit delta, ATP5F1E/subunit epsilon, ATP5PF/subunit F6, ATP5PB/subunit b, ATP5PD/subunit d, ATP5PO/subunit OSCP. ATP synthase complex consists of a soluble F(1) head domain (subunits alpha(3) and beta(3)) - the catalytic core - and a membrane F(0) domain - the membrane proton channel (subunits c, a, 8, e, f, g, k and j). These two domains are linked by a central stalk (subunits gamma, delta, and epsilon) rotating inside the F1 region and a stationary peripheral stalk (subunits F6, b, d, and OSCP). Interacts with ATPAF2. Interacts with HRG; the interaction occurs on the surface of T-cells and alters the cell morphology when associated with concanavalin (in vitro). Interacts with PLG (angiostatin peptide); the interaction inhibits most of the angiogenic properties of angiostatin. Interacts with BLOC1S1. Interacts with BCL2L1 isoform BCL-X(L); the interaction mediates the association of BCL2L1 isoform BCL-X(L) with the mitochondrial membrane F(1)F(0) ATP synthase and enhances neurons metabolic efficiency. Interacts with CLN5 and PPT1. Interacts with S100A1; this interaction increases F1-ATPase activity. Interacts with ABCB7; this interaction allows the regulation of cellular iron homeostasis and cellular reactive oxygen species (ROS) levels in cardiomyocytes. In terms of processing, acetylated on lysine residues. BLOC1S1 is required for acetylation.

It is found in the mitochondrion inner membrane. Its subcellular location is the cell membrane. Functionally, subunit alpha, of the mitochondrial membrane ATP synthase complex (F(1)F(0) ATP synthase or Complex V) that produces ATP from ADP in the presence of a proton gradient across the membrane which is generated by electron transport complexes of the respiratory chain. ATP synthase complex consist of a soluble F(1) head domain - the catalytic core - and a membrane F(1) domain - the membrane proton channel. These two domains are linked by a central stalk rotating inside the F(1) region and a stationary peripheral stalk. During catalysis, ATP synthesis in the catalytic domain of F(1) is coupled via a rotary mechanism of the central stalk subunits to proton translocation. In vivo, can only synthesize ATP although its ATP hydrolase activity can be activated artificially in vitro. With the catalytic subunit beta (ATP5F1B), forms the catalytic core in the F(1) domain. Subunit alpha does not bear the catalytic high-affinity ATP-binding sites. The chain is ATP synthase F(1) complex subunit alpha, mitochondrial from Pongo abelii (Sumatran orangutan).